Reading from the N-terminus, the 460-residue chain is Ribulose bisphosphate carboxylase (460 aa).

Asn-112 contacts substrate. The Proton acceptor role is filled by Lys-167. Residue Lys-169 coordinates substrate. Mg(2+) is bound by residues Lys-192, Asp-194, and Glu-195. Position 192 is an N6-carboxylysine (Lys-192). Catalysis depends on His-288, which acts as the Proton acceptor. Arg-289, His-322, and Ser-369 together coordinate substrate.

This sequence belongs to the RuBisCO large chain family. Type II subfamily. In terms of assembly, homodimer. The cofactor is Mg(2+).

The catalysed reaction is 2 (2R)-3-phosphoglycerate + 2 H(+) = D-ribulose 1,5-bisphosphate + CO2 + H2O. It carries out the reaction D-ribulose 1,5-bisphosphate + O2 = 2-phosphoglycolate + (2R)-3-phosphoglycerate + 2 H(+). In terms of biological role, ruBisCO catalyzes two reactions: the carboxylation of D-ribulose 1,5-bisphosphate, the primary event in carbon dioxide fixation, as well as the oxidative fragmentation of the pentose substrate. Both reactions occur simultaneously and in competition at the same active site. This Rhodopseudomonas palustris (strain BisA53) protein is Ribulose bisphosphate carboxylase.